Here is a 290-residue protein sequence, read N- to C-terminus: ATP synthase gamma chain (290 aa).

The protein belongs to the ATPase gamma chain family. In terms of assembly, F-type ATPases have 2 components, CF(1) - the catalytic core - and CF(0) - the membrane proton channel. CF(1) has five subunits: alpha(3), beta(3), gamma(1), delta(1), epsilon(1). CF(0) has three main subunits: a, b and c.

The protein localises to the cell membrane. Produces ATP from ADP in the presence of a proton gradient across the membrane. The gamma chain is believed to be important in regulating ATPase activity and the flow of protons through the CF(0) complex. The polypeptide is ATP synthase gamma chain (Buchnera aphidicola subsp. Schlechtendalia chinensis).